A 311-amino-acid chain; its full sequence is Pseudouridine-5'-phosphate glycosidase (311 aa).

Glu-32 acts as the Proton donor in catalysis. Substrate-binding residues include Lys-96 and Val-116. Residue Asp-148 participates in Mn(2+) binding. Residue 150–152 (SAD) participates in substrate binding. The active-site Nucleophile is the Lys-169.

It belongs to the pseudouridine-5'-phosphate glycosidase family. In terms of assembly, homotrimer. Mn(2+) is required as a cofactor.

The catalysed reaction is D-ribose 5-phosphate + uracil = psi-UMP + H2O. Catalyzes the reversible cleavage of pseudouridine 5'-phosphate (PsiMP) to ribose 5-phosphate and uracil. Functions biologically in the cleavage direction, as part of a pseudouridine degradation pathway. The chain is Pseudouridine-5'-phosphate glycosidase from Roseiflexus sp. (strain RS-1).